A 334-amino-acid chain; its full sequence is Ornithine carbamoyltransferase (334 aa).

Carbamoyl phosphate-binding positions include 57 to 60 (STRT), Gln-84, Arg-108, and 135 to 138 (HPTQ). L-ornithine contacts are provided by residues Asn-169, Asp-233, and 237–238 (SM). Carbamoyl phosphate contacts are provided by residues 275-276 (CL) and Arg-320.

This sequence belongs to the aspartate/ornithine carbamoyltransferase superfamily. OTCase family.

The protein resides in the cytoplasm. It carries out the reaction carbamoyl phosphate + L-ornithine = L-citrulline + phosphate + H(+). It functions in the pathway amino-acid biosynthesis; L-arginine biosynthesis; L-arginine from L-ornithine and carbamoyl phosphate: step 1/3. Its function is as follows. Reversibly catalyzes the transfer of the carbamoyl group from carbamoyl phosphate (CP) to the N(epsilon) atom of ornithine (ORN) to produce L-citrulline. This chain is Ornithine carbamoyltransferase, found in Vibrio vulnificus (strain YJ016).